Consider the following 638-residue polypeptide: Cytoplasmic dynein 1 intermediate chain 2 (638 aa).

2 stretches are compositionally biased toward basic and acidic residues: residues Met1–Arg13 and Gln20–Ala43. Disordered regions lie at residues Met1 to Pro135 and Thr155 to Gln214. At Ser2 the chain carries N-acetylserine. Ser51 carries the diphosphoserine modification. Ser51, Ser73, Trp81, Pro84, and Ser90 each carry phosphoserine. Residues Pro88–Ser97 are compositionally biased toward low complexity. Thr95 is modified (phosphothreonine). A phosphoserine mark is found at Ser97, Ser101, and Ser104. Positions Glu190–Gln214 are enriched in basic and acidic residues. WD repeat units lie at residues Ser277–Glu326, His330–Val370, Ala379–Asp420, Ser429–Ser469, Gly474–Ser519, Asp522–Thr562, and Glu568–Arg607.

This sequence belongs to the dynein intermediate chain family. As to quaternary structure, homodimer. The cytoplasmic dynein 1 complex consists of two catalytic heavy chains (HCs) and a number of non-catalytic subunits presented by intermediate chains (ICs), light intermediate chains (LICs) and light chains (LCs); the composition seems to vary in respect to the IC, LIC and LC composition. The heavy chain homodimer serves as a scaffold for the probable homodimeric assembly of the respective non-catalytic subunits. The ICs and LICs bind directly to the HC dimer and the LCs assemble on the IC dimer. Interacts with DYNLT3. Interacts with DYNLT1. Interacts (dephosphorylated at Ser-90) with DCTN1. Interacts with BICD2. Interacts with SPEF2. Interacts with CFAP61. In terms of assembly, (Microbial infection) Interacts with human adenovirus 5 hexon protein; this interaction probably allows virus intracellular transport. The phosphorylation status of Ser-90 appears to be involved in dynactin-dependent target binding. In terms of processing, pyrophosphorylation by 5-diphosphoinositol pentakisphosphate (5-IP7) promotes interaction with DCTN1. Serine pyrophosphorylation is achieved by Mg(2+)-dependent, but enzyme independent transfer of a beta-phosphate from a inositol pyrophosphate to a pre-phosphorylated serine residue.

Its subcellular location is the cytoplasm. The protein resides in the cytoskeleton. Functionally, acts as one of several non-catalytic accessory components of the cytoplasmic dynein 1 complex that are thought to be involved in linking dynein to cargos and to adapter proteins that regulate dynein function. Cytoplasmic dynein 1 acts as a motor for the intracellular retrograde motility of vesicles and organelles along microtubules. The intermediate chains mediate the binding of dynein to dynactin via its 150 kDa component (p150-glued) DCTN1. Involved in membrane-transport, such as Golgi apparatus, late endosomes and lysosomes. In Homo sapiens (Human), this protein is Cytoplasmic dynein 1 intermediate chain 2.